The sequence spans 659 residues: Methionine--tRNA ligase (659 aa).

Residues 13-23 (YYPSGNLHIGH) carry the 'HIGH' region motif. The short motif at 308-312 (KMSKS) is the 'KMSKS' region element. Lys311 is an ATP binding site. A tRNA-binding domain is found at 559–659 (DFDKVEIKAA…SAIPNGAVIK (101 aa)).

The protein belongs to the class-I aminoacyl-tRNA synthetase family. MetG type 2B subfamily. Homodimer.

It is found in the cytoplasm. The enzyme catalyses tRNA(Met) + L-methionine + ATP = L-methionyl-tRNA(Met) + AMP + diphosphate. Its function is as follows. Is required not only for elongation of protein synthesis but also for the initiation of all mRNA translation through initiator tRNA(fMet) aminoacylation. This chain is Methionine--tRNA ligase, found in Staphylococcus haemolyticus (strain JCSC1435).